Here is a 305-residue protein sequence, read N- to C-terminus: Endonuclease 1 (305 aa).

Residues methionine 1–serine 28 form the signal peptide. 2 residues coordinate a divalent metal cation: tryptophan 29 and histidine 34. Tryptophan 29–histidine 34 contacts substrate. Cysteines 38 and 69 form a disulfide. 2 residues coordinate a divalent metal cation: aspartate 73 and histidine 88. Substrate contacts are provided by residues aspartate 73–tyrosine 79, histidine 88–aspartate 91, and serine 98–arginine 103. 3 disulfides stabilise this stretch: cysteine 97-cysteine 249, cysteine 105-cysteine 115, and cysteine 230-cysteine 236. Substrate contacts are provided by asparagine 122 and tyrosine 139. N-linked (GlcNAc...) asparagine glycosylation is present at asparagine 122. Asparagine 140 carries an N-linked (GlcNAc...) asparagine glycan. Positions 150, 154, 160, 184, and 188 each coordinate a divalent metal cation. Residues histidine 150–asparagine 199 are substrate binding. N-linked (GlcNAc...) asparagine glycosylation is present at asparagine 214. Residues methionine 287 to threonine 305 constitute a propeptide, removed in mature form.

The protein belongs to the nuclease type I family. In terms of assembly, monomer. Mn(2+) is required as a cofactor. The cofactor is Ca(2+). Mostly expressed in flowers and during leaf and stem senescence, and, to a lower extent, detectable at low levels in roots, leaves, and stems. Particularly expressed in senescing tissues in a NAC92/ORE1-dependent manner.

The catalysed reaction is Endonucleolytic cleavage to 5'-phosphomononucleotide and 5'-phosphooligonucleotide end-products.. Its function is as follows. Endonuclease that can use RNA, single-stranded and double-stranded DNA as substrates. Hydrolyzes single-stranded DNA and RNA without apparent specificity for bases during senescence. Endonuclease that recognizes and cleaves all types of mismatches with high efficiency, including heteroduplex double-stranded DNA. Maybe involved in programmed cell death (PCD) and senescence. This is Endonuclease 1 from Arabidopsis thaliana (Mouse-ear cress).